The chain runs to 248 residues: tRNA uridine(34) hydroxylase (248 aa).

The Rhodanese domain occupies 124–218; that stretch reads TKQDVIVVDT…YLEDTQNKNN (95 aa). The active-site Cysteine persulfide intermediate is C178.

It belongs to the TrhO family.

The enzyme catalyses uridine(34) in tRNA + AH2 + O2 = 5-hydroxyuridine(34) in tRNA + A + H2O. Its function is as follows. Catalyzes oxygen-dependent 5-hydroxyuridine (ho5U) modification at position 34 in tRNAs. This chain is tRNA uridine(34) hydroxylase, found in Rickettsia bellii (strain OSU 85-389).